A 346-amino-acid polypeptide reads, in one-letter code: MVYGVIFGANSYEHEISIVSAVVLKKVLKAQKKFIFCDKNKEFFLIDEEKMNAKTFSSGAYKKEKALVLKQGGFFIKTMLGEKKLDMDVAVNIVHGKDGEDGKIAALLDFYGIKYIGPRIEASVLSFNKALTKLYAQSVGVKTLDYKVLNLHKEQNVSLSFPCILKPARLGSSIGISIVKDESELKYAKDVAFEFDEDVVVEQFVSNIKEYNLAGCMIGEKMEFSIIEEPRKNEILDFEQKYLGFSESSKVSEANISEELKQKLRDNFTRIYNPLFKGALIRCDFFVIDDEVYLNEINPNPGSLANYLFEDFTNIVDNLAKNIELEKQIKIDYAFIHSINGQKGKL.

Residues 133–324 form the ATP-grasp domain; sequence KLYAQSVGVK…IVDNLAKNIE (192 aa). 159–211 contacts ATP; that stretch reads LSFPCILKPARLGSSIGISIVKDESELKYAKDVAFEFDEDVVVEQFVSNIKEY. Residues aspartate 284, glutamate 296, and asparagine 298 each coordinate Mg(2+).

The protein belongs to the D-alanine--D-alanine ligase family. It depends on Mg(2+) as a cofactor. Mn(2+) is required as a cofactor.

It is found in the cytoplasm. It carries out the reaction 2 D-alanine + ATP = D-alanyl-D-alanine + ADP + phosphate + H(+). The protein operates within cell wall biogenesis; peptidoglycan biosynthesis. In terms of biological role, cell wall formation. This chain is D-alanine--D-alanine ligase, found in Campylobacter lari (strain RM2100 / D67 / ATCC BAA-1060).